A 268-amino-acid chain; its full sequence is 3-deoxy-manno-octulosonate cytidylyltransferase (268 aa).

Belongs to the KdsB family.

The protein localises to the cytoplasm. It catalyses the reaction 3-deoxy-alpha-D-manno-oct-2-ulosonate + CTP = CMP-3-deoxy-beta-D-manno-octulosonate + diphosphate. It functions in the pathway nucleotide-sugar biosynthesis; CMP-3-deoxy-D-manno-octulosonate biosynthesis; CMP-3-deoxy-D-manno-octulosonate from 3-deoxy-D-manno-octulosonate and CTP: step 1/1. It participates in bacterial outer membrane biogenesis; lipopolysaccharide biosynthesis. Functionally, activates KDO (a required 8-carbon sugar) for incorporation into bacterial lipopolysaccharide in Gram-negative bacteria. The chain is 3-deoxy-manno-octulosonate cytidylyltransferase from Ralstonia nicotianae (strain ATCC BAA-1114 / GMI1000) (Ralstonia solanacearum).